We begin with the raw amino-acid sequence, 337 residues long: Monoacylglycerol lipase ABHD6 (337 aa).

Residues 1–8 lie on the Extracellular side of the membrane; that stretch reads MDLDVVNM. Residues 9–29 form a helical; Signal-anchor for type II membrane protein membrane-spanning segment; sequence FVIAGGTLAIPILAFVASFLL. Residues 30–337 are Cytoplasmic-facing; that stretch reads WPSALIRIYY…HNPDNNKKLN (308 aa). The active-site Nucleophile is the Ser-148. Residues Asp-278 and His-306 each act as charge relay system in the active site.

This sequence belongs to the AB hydrolase superfamily.

It is found in the late endosome membrane. Its subcellular location is the lysosome membrane. It localises to the mitochondrion membrane. It catalyses the reaction Hydrolyzes glycerol monoesters of long-chain fatty acids.. It carries out the reaction 1-octanoylglycerol + H2O = octanoate + glycerol + H(+). The catalysed reaction is 1-decanoylglycerol + H2O = decanoate + glycerol + H(+). The enzyme catalyses 1-dodecanoylglycerol + H2O = dodecanoate + glycerol + H(+). It catalyses the reaction 1-tetradecanoylglycerol + H2O = tetradecanoate + glycerol + H(+). It carries out the reaction 2-hexadecanoylglycerol + H2O = glycerol + hexadecanoate + H(+). The catalysed reaction is 2-(9Z-octadecenoyl)-glycerol + H2O = glycerol + (9Z)-octadecenoate + H(+). The enzyme catalyses 1-(9Z-octadecenoyl)-glycerol + H2O = glycerol + (9Z)-octadecenoate + H(+). It catalyses the reaction 2-(9Z,12Z-octadecadienoyl)-glycerol + H2O = (9Z,12Z)-octadecadienoate + glycerol + H(+). It carries out the reaction 2-(5Z,8Z,11Z,14Z-eicosatetraenoyl)-glycerol + H2O = glycerol + (5Z,8Z,11Z,14Z)-eicosatetraenoate + H(+). The catalysed reaction is 1-(5Z,8Z,11Z,14Z-eicosatetraenoyl)-glycerol + H2O = glycerol + (5Z,8Z,11Z,14Z)-eicosatetraenoate + H(+). The enzyme catalyses 1-(9Z,12Z-octadecadienoyl)-glycerol + H2O = (9Z,12Z)-octadecadienoate + glycerol + H(+). It catalyses the reaction 3-(9Z-octadecenoyl)-sn-glycero-1-phospho-(3'-(9Z-octadecenoyl)-1'-sn-glycerol) + H2O = 3-(9Z-octadecenoyl)-sn-glycero-1-phospho-(1'-sn-glycerol) + (9Z)-octadecenoate + H(+). It carries out the reaction (S,S)-2-(9Z-octadecenoyl)-sn-glycero-1-phospho-(2'-(9Z-octadecenoyl)-1'-sn-glycerol) + H2O = (S,S)-2-(9Z-octadecenoyl)-sn-glycero-1-phospho-(1'-sn-glycerol) + (9Z)-octadecenoate + H(+). The catalysed reaction is (R,R)-2-(9Z-octadecenoyl)-sn-glycero-3-phospho-(2'-(9Z-octadecenoyl)-3'-sn-glycerol) + H2O = (R,R)-2-(9Z-octadecenoyl)-sn-glycero-3-phospho-(3'-sn-glycerol) + (9Z)-octadecenoate + H(+). Functionally, lipase that preferentially hydrolysis medium-chain saturated monoacylglycerols including 2-arachidonoylglycerol. Through 2-arachidonoylglycerol degradation may regulate endocannabinoid signaling pathways. Also has a lysophosphatidyl lipase activity with a preference for lysophosphatidylglycerol among other lysophospholipids. Also able to degrade bis(monoacylglycero)phosphate (BMP) and constitutes the major enzyme for BMP catabolism. BMP, also known as lysobisphosphatidic acid, is enriched in late endosomes and lysosomes and plays a key role in the formation of intraluminal vesicles and in lipid sorting. This Rattus norvegicus (Rat) protein is Monoacylglycerol lipase ABHD6.